We begin with the raw amino-acid sequence, 273 residues long: Holocytochrome c-type synthase (273 aa).

Low complexity predominate over residues 1–18 (MGLSASSPAATAQSAAEP). Residues 1-39 (MGLSASSPAATAQSAAEPSKQHQVASPPSECPMHQEKMR) are disordered. 2 HRM repeats span residues 30-35 (ECPMHQ) and 40-45 (GCPMHM).

This sequence belongs to the cytochrome c-type heme lyase family.

The protein resides in the mitochondrion inner membrane. It carries out the reaction holo-[cytochrome c] = apo-[cytochrome c] + heme b. In terms of biological role, lyase that catalyzes the covalent linking of the heme group to the cytochrome C apoprotein to produce the mature functional cytochrome. In Gallus gallus (Chicken), this protein is Holocytochrome c-type synthase (HCCS).